The following is a 353-amino-acid chain: Quinolinate synthase (353 aa).

Positions 47 and 68 each coordinate iminosuccinate. Residue Cys-113 coordinates [4Fe-4S] cluster. Residues 139 to 141 and Ser-156 contribute to the iminosuccinate site; that span reads YAN. A [4Fe-4S] cluster-binding site is contributed by Cys-200. Iminosuccinate-binding positions include 226–228 and Thr-243; that span reads HPE. Cys-297 is a binding site for [4Fe-4S] cluster.

It belongs to the quinolinate synthase family. Type 1 subfamily. Requires [4Fe-4S] cluster as cofactor.

It is found in the cytoplasm. The enzyme catalyses iminosuccinate + dihydroxyacetone phosphate = quinolinate + phosphate + 2 H2O + H(+). It functions in the pathway cofactor biosynthesis; NAD(+) biosynthesis; quinolinate from iminoaspartate: step 1/1. Catalyzes the condensation of iminoaspartate with dihydroxyacetone phosphate to form quinolinate. This is Quinolinate synthase from Yersinia pestis bv. Antiqua (strain Antiqua).